We begin with the raw amino-acid sequence, 200 residues long: Protein Rv0461 (200 aa).

The disordered stretch occupies residues 47–67; it reads DRAGKSWPGSTPKPQEDPVGV. The next 3 helical transmembrane spans lie at 102-122, 134-154, and 159-179; these read FVLVVLGVWIGAGEVGLSLFY, VFVVLVYVVACTVGGLILALV, and LITALSLGVMSGPFASVAAAA.

It localises to the cell membrane. In Mycobacterium tuberculosis (strain ATCC 25618 / H37Rv), this protein is Protein Rv0461.